The primary structure comprises 492 residues: Aspartyl/glutamyl-tRNA(Asn/Gln) amidotransferase subunit B (492 aa).

The protein belongs to the GatB/GatE family. GatB subfamily. As to quaternary structure, heterotrimer of A, B and C subunits.

The catalysed reaction is L-glutamyl-tRNA(Gln) + L-glutamine + ATP + H2O = L-glutaminyl-tRNA(Gln) + L-glutamate + ADP + phosphate + H(+). It catalyses the reaction L-aspartyl-tRNA(Asn) + L-glutamine + ATP + H2O = L-asparaginyl-tRNA(Asn) + L-glutamate + ADP + phosphate + 2 H(+). Functionally, allows the formation of correctly charged Asn-tRNA(Asn) or Gln-tRNA(Gln) through the transamidation of misacylated Asp-tRNA(Asn) or Glu-tRNA(Gln) in organisms which lack either or both of asparaginyl-tRNA or glutaminyl-tRNA synthetases. The reaction takes place in the presence of glutamine and ATP through an activated phospho-Asp-tRNA(Asn) or phospho-Glu-tRNA(Gln). This is Aspartyl/glutamyl-tRNA(Asn/Gln) amidotransferase subunit B from Dehalococcoides mccartyi (strain ATCC BAA-2266 / KCTC 15142 / 195) (Dehalococcoides ethenogenes (strain 195)).